Consider the following 205-residue polypeptide: N-(5'-phosphoribosyl)anthranilate isomerase (205 aa).

The protein belongs to the TrpF family.

The catalysed reaction is N-(5-phospho-beta-D-ribosyl)anthranilate = 1-(2-carboxyphenylamino)-1-deoxy-D-ribulose 5-phosphate. It functions in the pathway amino-acid biosynthesis; L-tryptophan biosynthesis; L-tryptophan from chorismate: step 3/5. In Thermotoga petrophila (strain ATCC BAA-488 / DSM 13995 / JCM 10881 / RKU-1), this protein is N-(5'-phosphoribosyl)anthranilate isomerase.